The primary structure comprises 254 residues: Diphthine synthase (254 aa).

S-adenosyl-L-methionine is bound by residues Leu11, Asp86, Ile89, 114 to 115, Leu166, Leu207, and His232; that span reads SV.

Belongs to the diphthine synthase family. Homodimer.

The catalysed reaction is 2-[(3S)-amino-3-carboxypropyl]-L-histidyl-[translation elongation factor 2] + 3 S-adenosyl-L-methionine = diphthine-[translation elongation factor 2] + 3 S-adenosyl-L-homocysteine + 3 H(+). Its pathway is protein modification; peptidyl-diphthamide biosynthesis. S-adenosyl-L-methionine-dependent methyltransferase that catalyzes the trimethylation of the amino group of the modified target histidine residue in translation elongation factor 2 (EF-2), to form an intermediate called diphthine. The three successive methylation reactions represent the second step of diphthamide biosynthesis. The sequence is that of Diphthine synthase from Sulfurisphaera tokodaii (strain DSM 16993 / JCM 10545 / NBRC 100140 / 7) (Sulfolobus tokodaii).